Here is a 253-residue protein sequence, read N- to C-terminus: DNA repair protein RecO (253 aa).

This sequence belongs to the RecO family.

In terms of biological role, involved in DNA repair and RecF pathway recombination. The sequence is that of DNA repair protein RecO from Streptococcus agalactiae serotype III (strain NEM316).